The sequence spans 500 residues: Glycerol kinase (500 aa).

Residue Thr13 participates in ADP binding. ATP contacts are provided by Thr13, Thr14, and Ser15. Thr13 serves as a coordination point for sn-glycerol 3-phosphate. Arg17 is a binding site for ADP. Positions 83, 84, 135, and 244 each coordinate sn-glycerol 3-phosphate. Residues Arg83, Glu84, Tyr135, Asp244, and Gln245 each contribute to the glycerol site. Positions 266 and 309 each coordinate ADP. 4 residues coordinate ATP: Thr266, Gly309, Gln313, and Gly410. Residues Gly410 and Asn414 each coordinate ADP.

This sequence belongs to the FGGY kinase family.

It carries out the reaction glycerol + ATP = sn-glycerol 3-phosphate + ADP + H(+). The protein operates within polyol metabolism; glycerol degradation via glycerol kinase pathway; sn-glycerol 3-phosphate from glycerol: step 1/1. With respect to regulation, inhibited by fructose 1,6-bisphosphate (FBP). Key enzyme in the regulation of glycerol uptake and metabolism. Catalyzes the phosphorylation of glycerol to yield sn-glycerol 3-phosphate. The sequence is that of Glycerol kinase from Burkholderia ambifaria (strain ATCC BAA-244 / DSM 16087 / CCUG 44356 / LMG 19182 / AMMD) (Burkholderia cepacia (strain AMMD)).